The sequence spans 367 residues: 2-aminoethylphosphonate--pyruvate transaminase (367 aa).

Lys194 bears the N6-(pyridoxal phosphate)lysine mark.

It belongs to the class-V pyridoxal-phosphate-dependent aminotransferase family. PhnW subfamily. Homodimer. Pyridoxal 5'-phosphate is required as a cofactor.

The catalysed reaction is (2-aminoethyl)phosphonate + pyruvate = phosphonoacetaldehyde + L-alanine. Involved in phosphonate degradation. The sequence is that of 2-aminoethylphosphonate--pyruvate transaminase from Salmonella heidelberg (strain SL476).